The sequence spans 171 residues: 6,7-dimethyl-8-ribityllumazine synthase (171 aa).

Residues Phe-24, 58–60 (ALE), and 82–84 (AVI) contribute to the 5-amino-6-(D-ribitylamino)uracil site. 87-88 (ET) serves as a coordination point for (2S)-2-hydroxy-3-oxobutyl phosphate. His-90 (proton donor) is an active-site residue. Position 115 (Asn-115) interacts with 5-amino-6-(D-ribitylamino)uracil. Arg-129 is a (2S)-2-hydroxy-3-oxobutyl phosphate binding site. Residues 150–171 (ALDQLGDDEDEEEDEDDEEERA) are disordered. Positions 154-171 (LGDDEDEEEDEDDEEERA) are enriched in acidic residues.

Belongs to the DMRL synthase family.

It catalyses the reaction (2S)-2-hydroxy-3-oxobutyl phosphate + 5-amino-6-(D-ribitylamino)uracil = 6,7-dimethyl-8-(1-D-ribityl)lumazine + phosphate + 2 H2O + H(+). It functions in the pathway cofactor biosynthesis; riboflavin biosynthesis; riboflavin from 2-hydroxy-3-oxobutyl phosphate and 5-amino-6-(D-ribitylamino)uracil: step 1/2. In terms of biological role, catalyzes the formation of 6,7-dimethyl-8-ribityllumazine by condensation of 5-amino-6-(D-ribitylamino)uracil with 3,4-dihydroxy-2-butanone 4-phosphate. This is the penultimate step in the biosynthesis of riboflavin. This Burkholderia cenocepacia (strain HI2424) protein is 6,7-dimethyl-8-ribityllumazine synthase.